A 1050-amino-acid chain; its full sequence is DNA polymerase I A, chloroplastic/mitochondrial (1050 aa).

The transit peptide at 1 to 91 directs the protein to the chloroplast and mitochondrion; that stretch reads MAMGVSLTSH…VVFNGEWELR (91 aa). The segment at 202–240 is disordered; that stretch reads PRKGLDVGDNMDVNPKGEGIQRPLISDKSSGTANGNKNT. Residues 228-240 are compositionally biased toward polar residues; that stretch reads DKSSGTANGNKNT. The 3'-5' exonuclease domain maps to 312-490; that stretch reads ELICFSIYCG…LYESMTKKLQ (179 aa). The disordered stretch occupies residues 673–694; the sequence is VVEDDDVETSETQKSKTDDETD. A polymerase region spans residues 717–1048; the sequence is AIASLCEVCS…DAKCAQNWYA (332 aa).

The protein belongs to the DNA polymerase type-A family. Expressed in shoot apical meristem.

The protein resides in the plastid. Its subcellular location is the chloroplast. The protein localises to the mitochondrion. It catalyses the reaction DNA(n) + a 2'-deoxyribonucleoside 5'-triphosphate = DNA(n+1) + diphosphate. With respect to regulation, not inhibited by aphidicolin. In terms of biological role, in addition to polymerase activity, this DNA polymerase exhibits 5'-3' exonuclease activity. Required for DNA replication and accumulation in plastids and mitochondria. May be required for DNA repair in both organelles. This chain is DNA polymerase I A, chloroplastic/mitochondrial (POLIA), found in Arabidopsis thaliana (Mouse-ear cress).